The primary structure comprises 556 residues: Peptidylarginine deiminase (556 aa).

The N-terminal stretch at 1–23 (MKKLLQAKALILALGLFQLPAIA) is a signal peptide. Positions 24 to 43 (QTQMQADRTNGQFATEEMQR) are excised as a propeptide. The Amidino-cysteine intermediate role is filled by Cys-351.

It belongs to the agmatine deiminase family. Requires FAD as cofactor. The cofactor is FMN.

Its subcellular location is the secreted. With respect to regulation, inhibited by cysteine and TLCK. Inhibited by high concentration of thiourea and thio-L-citrulline. Its function is as follows. Deiminates the guanidino group of C-terminal arginine residues on a variety of peptides, including the vasoregulatory peptide-hormone bradykinin, to yield ammonia and a citrulline residue. May promote the growth of the pathogen in the periodontal pocket by producing ammonia, ammonia having a protective effect during acidic cleaning cycles in the mouth. This chain is Peptidylarginine deiminase, found in Porphyromonas gingivalis (strain ATCC BAA-308 / W83).